The sequence spans 264 residues: Tryptophan synthase alpha chain (264 aa).

Active-site proton acceptor residues include Glu45 and Asp56.

Belongs to the TrpA family. Tetramer of two alpha and two beta chains.

It carries out the reaction (1S,2R)-1-C-(indol-3-yl)glycerol 3-phosphate + L-serine = D-glyceraldehyde 3-phosphate + L-tryptophan + H2O. The protein operates within amino-acid biosynthesis; L-tryptophan biosynthesis; L-tryptophan from chorismate: step 5/5. The alpha subunit is responsible for the aldol cleavage of indoleglycerol phosphate to indole and glyceraldehyde 3-phosphate. This is Tryptophan synthase alpha chain from Leptospira interrogans serogroup Icterohaemorrhagiae serovar copenhageni (strain Fiocruz L1-130).